Reading from the N-terminus, the 274-residue chain is MQFSKMHGLGNDFMVVDAVTQNVYFSPELICRLANRHTGVGFDQLLVVEAPYDPELDFHYRIFNADGSEVAQCGNGARCFARFVRIKGLTNKREIKVSTQSGRMTLHVMDNEDVCVNMGEPEFEPQKVPFRAQKVEKTYIIRAMERTVLCGVVSMGNPHCVIQVEDIKTAEVESLGSVLEQHERFPERANIGFMQVVDRNTLHLRVFERGAGETQACGSGACAAVAVGISQGLLDRKVKVNLPGGSLSIEWKGTGNPLYMTGPAVHIYDGTIQL.

The substrate site is built by asparagine 11, glutamine 44, and asparagine 64. Cysteine 73 functions as the Proton donor in the catalytic mechanism. Substrate contacts are provided by residues 74–75, asparagine 157, asparagine 190, and 208–209; these read GN and ER. Cysteine 217 (proton acceptor) is an active-site residue. A substrate-binding site is contributed by 218–219; it reads GS.

The protein belongs to the diaminopimelate epimerase family. As to quaternary structure, homodimer.

The protein resides in the cytoplasm. It catalyses the reaction (2S,6S)-2,6-diaminopimelate = meso-2,6-diaminopimelate. It functions in the pathway amino-acid biosynthesis; L-lysine biosynthesis via DAP pathway; DL-2,6-diaminopimelate from LL-2,6-diaminopimelate: step 1/1. Catalyzes the stereoinversion of LL-2,6-diaminopimelate (L,L-DAP) to meso-diaminopimelate (meso-DAP), a precursor of L-lysine and an essential component of the bacterial peptidoglycan. The protein is Diaminopimelate epimerase of Proteus mirabilis (strain HI4320).